Consider the following 55-residue polypeptide: Male-specific sperm protein Mst84Dc (55 aa).

Belongs to the MST(3)CGP family. In terms of tissue distribution, testis.

This is Male-specific sperm protein Mst84Dc (Mst84Dc) from Drosophila melanogaster (Fruit fly).